The primary structure comprises 483 residues: ATP synthase subunit beta (483 aa).

G162–T169 provides a ligand contact to ATP.

The protein belongs to the ATPase alpha/beta chains family. In terms of assembly, F-type ATPases have 2 components, CF(1) - the catalytic core - and CF(0) - the membrane proton channel. CF(1) has five subunits: alpha(3), beta(3), gamma(1), delta(1), epsilon(1). CF(0) has four main subunits: a(1), b(1), b'(1) and c(9-12).

It is found in the cellular thylakoid membrane. It carries out the reaction ATP + H2O + 4 H(+)(in) = ADP + phosphate + 5 H(+)(out). Functionally, produces ATP from ADP in the presence of a proton gradient across the membrane. The catalytic sites are hosted primarily by the beta subunits. The protein is ATP synthase subunit beta of Prochloron didemni.